The primary structure comprises 283 residues: 4-diphosphocytidyl-2-C-methyl-D-erythritol kinase (283 aa).

Residue Lys10 is part of the active site. 99–109 lines the ATP pocket; sequence PMGGGLGGGSS. Asp141 is an active-site residue.

The protein belongs to the GHMP kinase family. IspE subfamily. Homodimer.

It catalyses the reaction 4-CDP-2-C-methyl-D-erythritol + ATP = 4-CDP-2-C-methyl-D-erythritol 2-phosphate + ADP + H(+). The protein operates within isoprenoid biosynthesis; isopentenyl diphosphate biosynthesis via DXP pathway; isopentenyl diphosphate from 1-deoxy-D-xylulose 5-phosphate: step 3/6. Functionally, catalyzes the phosphorylation of the position 2 hydroxy group of 4-diphosphocytidyl-2C-methyl-D-erythritol. The chain is 4-diphosphocytidyl-2-C-methyl-D-erythritol kinase from Escherichia coli O127:H6 (strain E2348/69 / EPEC).